The chain runs to 1311 residues: Ubiquitin carboxyl-terminal hydrolase 36 (1311 aa).

Composition is skewed to low complexity over residues 120-134 (AAAA…SAGS) and 156-174 (STPT…SSSS). The tract at residues 120-189 (AAAATNNGNS…NPNELPKPKR (70 aa)) is disordered. The region spanning 212 to 533 (AGMINVGNTC…NSYIMFYELD (322 aa)) is the USP domain. C221 serves as the catalytic Nucleophile. H492 serves as the catalytic Proton acceptor. The tract at residues 546–575 (NGLRQLSNGHHHHQQQQQQHQQQQQQQPTV) is disordered. Residues 560-572 (QQQQQHQQQQQQQ) show a composition bias toward low complexity. S581 is subject to Phosphoserine. 3 disordered regions span residues 587-620 (TRFI…GHSQ), 640-1095 (KFQE…GCLN), and 1136-1311 (DHGD…QQQS). Composition is skewed to low complexity over residues 605–616 (TTTTTATNNTTN), 660–716 (APAV…QQQQ), and 759–774 (TLTL…STPT). T767 is modified (phosphothreonine). Residues S787 and S789 each carry the phosphoserine modification. The segment covering 795 to 826 (SSGTPSSSTPTTTTTAAAAAASSPMQATAAAT) has biased composition (low complexity). Residues 836 to 853 (ARKRSLPDHHHHHPHHHV) are compositionally biased toward basic residues. Residues 869–879 (PATNFNSSSSK) show a composition bias toward polar residues. Residues 880–889 (QKTDAIDEIF) show a composition bias toward basic and acidic residues. A compositionally biased stretch (basic residues) spans 896–905 (NKKRINNKNQ). Acidic residues predominate over residues 910–920 (GDEEEDDEETL). 2 stretches are compositionally biased toward low complexity: residues 925 to 942 (NNSS…PTTN) and 950 to 979 (VSSS…STSA). Positions 980-989 (PPSPKTPPSP) are enriched in pro residues. S982 carries the post-translational modification Phosphoserine. T985 bears the Phosphothreonine mark. S988 is subject to Phosphoserine. Residues 1006–1020 (DDDDDEEEEDEDDEE) show a composition bias toward acidic residues. A compositionally biased stretch (low complexity) spans 1037–1050 (PFSSQQKPTPSPST). S1047 carries the post-translational modification Phosphoserine. Position 1050 is a phosphothreonine (T1050). Residues 1060 to 1081 (FNGTSSSTPHVGNGYQSEPSTP) are compositionally biased toward polar residues. Low complexity-rich tracts occupy residues 1154–1176 (VVTT…TADA) and 1204–1221 (TANG…PGYN). Polar residues predominate over residues 1246 to 1255 (QHASSSYRSN). A compositionally biased stretch (gly residues) spans 1267 to 1276 (GGNGGGGSGG).

It belongs to the peptidase C19 family. In terms of assembly, interacts with atms/PAF1, but not with CycT.

Its subcellular location is the nucleus. The protein resides in the nucleolus. It carries out the reaction Thiol-dependent hydrolysis of ester, thioester, amide, peptide and isopeptide bonds formed by the C-terminal Gly of ubiquitin (a 76-residue protein attached to proteins as an intracellular targeting signal).. Its function is as follows. Required for maintaining multiple types of adult stem cells, including male and female germline, epithelial follicle cell and intestinal stem cells. May function as a transcriptional repressor by continually deubiquiting histone H2B at the promoters of genes critical for cellular differentiation, thereby preventing histone H3 'Lys-4' trimethylation (H3K4). Controls selective autophagy activation by ubiquitinated proteins. This is Ubiquitin carboxyl-terminal hydrolase 36 (Usp36) from Drosophila willistoni (Fruit fly).